The primary structure comprises 242 residues: Small ribosomal subunit protein uS2 (242 aa).

The protein belongs to the universal ribosomal protein uS2 family.

In Idiomarina loihiensis (strain ATCC BAA-735 / DSM 15497 / L2-TR), this protein is Small ribosomal subunit protein uS2.